Reading from the N-terminus, the 509-residue chain is Histidine ammonia-lyase (509 aa).

A cross-link (5-imidazolinone (Ala-Gly)) is located at residues 142 to 144 (ASG). Ser-143 is modified (2,3-didehydroalanine (Ser)).

Belongs to the PAL/histidase family. Contains an active site 4-methylidene-imidazol-5-one (MIO), which is formed autocatalytically by cyclization and dehydration of residues Ala-Ser-Gly.

The protein localises to the cytoplasm. The enzyme catalyses L-histidine = trans-urocanate + NH4(+). The protein operates within amino-acid degradation; L-histidine degradation into L-glutamate; N-formimidoyl-L-glutamate from L-histidine: step 1/3. The protein is Histidine ammonia-lyase of Pseudomonas aeruginosa (strain LESB58).